We begin with the raw amino-acid sequence, 3165 residues long: ORFB polyprotein (3165 aa).

The region spanning 271–418 (MARSIGLSHE…LENEPDILVG (148 aa)) is the Peptidase C8 domain. Active-site for papain-like protease p48 activity residues include C341 and H388. Residues 453–472 (AEPGQRAKDNTNPSTPRPIE) are disordered. The next 6 membrane-spanning stretches (helical) occupy residues 791-811 (IMIA…YVPY), 823-843 (YILL…GYAC), 1166-1186 (AGLF…AAIM), 1193-1213 (KYLV…KALW), 1215-1235 (FPIF…VSVY), and 1356-1376 (ALGF…LRPP). An RNA-directed RNA polymerase region spans residues 1793–2208 (FYKSRKALKQ…AEDSADYRAW (416 aa)). 3 consecutive transmembrane segments (helical) span residues 2495–2515 (VRIY…MHWV), 2517–2537 (LFIQ…WSFW), and 2590–2610 (LGIV…EVLF). The 146-residue stretch at 2651–2796 (ATKAIEHGHV…IPFLEPTLPK (146 aa)) folds into the Helicase ATP-binding domain. 2664-2671 (AKTASGKS) provides a ligand contact to ATP. The short motif at 2751 to 2754 (DEFH) is the DEFH box element.

It in the C-terminal section; belongs to the DEAD box helicase family. Papain-like protease p48 is autocatalytically processed. The putative RNA-directed RNA polymerase/helicase may be further processed.

It localises to the host membrane. It carries out the reaction RNA(n) + a ribonucleoside 5'-triphosphate = RNA(n+1) + diphosphate. The enzyme catalyses ATP + H2O = ADP + phosphate + H(+). Functionally, papain-like protease p48 is a cysteine protease of the peptidase family C8. This is ORFB polyprotein from Cryphonectria hypovirus 1 (strain EP713) (CHV-1/EP713).